A 270-amino-acid chain; its full sequence is Formamidopyrimidine-DNA glycosylase (270 aa).

The active-site Schiff-base intermediate with DNA is the Pro2. Catalysis depends on Glu3, which acts as the Proton donor. The Proton donor; for beta-elimination activity role is filled by Lys58. The DNA site is built by His91, Arg110, and Arg151. The segment at 236–270 adopts an FPG-type zinc-finger fold; that stretch reads RVYDREDAPCRRCATPIRRIVQAQRASFYCPTCQR. Arg260 (proton donor; for delta-elimination activity) is an active-site residue.

It belongs to the FPG family. In terms of assembly, monomer. Zn(2+) is required as a cofactor.

The enzyme catalyses Hydrolysis of DNA containing ring-opened 7-methylguanine residues, releasing 2,6-diamino-4-hydroxy-5-(N-methyl)formamidopyrimidine.. The catalysed reaction is 2'-deoxyribonucleotide-(2'-deoxyribose 5'-phosphate)-2'-deoxyribonucleotide-DNA = a 3'-end 2'-deoxyribonucleotide-(2,3-dehydro-2,3-deoxyribose 5'-phosphate)-DNA + a 5'-end 5'-phospho-2'-deoxyribonucleoside-DNA + H(+). In terms of biological role, involved in base excision repair of DNA damaged by oxidation or by mutagenic agents. Acts as a DNA glycosylase that recognizes and removes damaged bases. Has a preference for oxidized purines, such as 7,8-dihydro-8-oxoguanine (8-oxoG). Has AP (apurinic/apyrimidinic) lyase activity and introduces nicks in the DNA strand. Cleaves the DNA backbone by beta-delta elimination to generate a single-strand break at the site of the removed base with both 3'- and 5'-phosphates. In Thiobacillus denitrificans (strain ATCC 25259 / T1), this protein is Formamidopyrimidine-DNA glycosylase.